The sequence spans 116 residues: Nucleoid-associated protein SACE_0254 (116 aa).

The disordered stretch occupies residues 90 to 116 (LQQEKMGPVTGALGGGQGLGGLGLPGL). Positions 101 to 116 (ALGGGQGLGGLGLPGL) are enriched in gly residues.

This sequence belongs to the YbaB/EbfC family. In terms of assembly, homodimer.

The protein localises to the cytoplasm. The protein resides in the nucleoid. Functionally, binds to DNA and alters its conformation. May be involved in regulation of gene expression, nucleoid organization and DNA protection. The polypeptide is Nucleoid-associated protein SACE_0254 (Saccharopolyspora erythraea (strain ATCC 11635 / DSM 40517 / JCM 4748 / NBRC 13426 / NCIMB 8594 / NRRL 2338)).